The sequence spans 225 residues: Transcription factor HES-7 (225 aa).

The region spanning 12 to 69 is the bHLH domain; the sequence is GPKMLKPLVEKRRRDRINRSLEELRLLLLERTRDQNLRNPKLEKAEILEFAVGYLRER. Residues 92-122 enclose the Orange domain; sequence YLSGFRECLLRLAAFAHDASPAARSQLFSAL. The interval 124-225 is disordered; the sequence is GYRRPKPPRP…PPPAFWRPWP (102 aa). Pro residues-rich tracts occupy residues 140–149 and 213–225; these read LPAPRPPLDP and PSLP…RPWP. Residues 221–224 carry the WRPW motif motif; that stretch reads WRPW.

Transcription repression requires formation of a complex with a corepressor protein of the Groucho/TLE family.

The protein localises to the nucleus. Functionally, transcriptional repressor. Represses transcription from both N box- and E box-containing promoters. May with HES1, cooperatively regulate somite formation in the presomitic mesoderm (PSM). May function as a segmentation clock, which is essential for coordinated somite segmentation. The sequence is that of Transcription factor HES-7 (Hes7) from Mus musculus (Mouse).